The primary structure comprises 342 residues: N-acetyl-gamma-glutamyl-phosphate reductase (342 aa).

Cysteine 149 is a catalytic residue.

Belongs to the NAGSA dehydrogenase family. Type 1 subfamily.

The protein localises to the cytoplasm. It carries out the reaction N-acetyl-L-glutamate 5-semialdehyde + phosphate + NADP(+) = N-acetyl-L-glutamyl 5-phosphate + NADPH + H(+). The protein operates within amino-acid biosynthesis; L-arginine biosynthesis; N(2)-acetyl-L-ornithine from L-glutamate: step 3/4. In terms of biological role, catalyzes the NADPH-dependent reduction of N-acetyl-5-glutamyl phosphate to yield N-acetyl-L-glutamate 5-semialdehyde. The chain is N-acetyl-gamma-glutamyl-phosphate reductase from Nitrosomonas eutropha (strain DSM 101675 / C91 / Nm57).